A 616-amino-acid chain; its full sequence is Dihydroxy-acid dehydratase (616 aa).

D81 contributes to the Mg(2+) binding site. Residue C122 coordinates [2Fe-2S] cluster. Residues D123 and K124 each coordinate Mg(2+). K124 bears the N6-carboxylysine mark. C195 contacts [2Fe-2S] cluster. E491 provides a ligand contact to Mg(2+). The active-site Proton acceptor is the S517.

This sequence belongs to the IlvD/Edd family. As to quaternary structure, homodimer. Requires [2Fe-2S] cluster as cofactor. Mg(2+) is required as a cofactor.

The enzyme catalyses (2R)-2,3-dihydroxy-3-methylbutanoate = 3-methyl-2-oxobutanoate + H2O. It carries out the reaction (2R,3R)-2,3-dihydroxy-3-methylpentanoate = (S)-3-methyl-2-oxopentanoate + H2O. It participates in amino-acid biosynthesis; L-isoleucine biosynthesis; L-isoleucine from 2-oxobutanoate: step 3/4. The protein operates within amino-acid biosynthesis; L-valine biosynthesis; L-valine from pyruvate: step 3/4. In terms of biological role, functions in the biosynthesis of branched-chain amino acids. Catalyzes the dehydration of (2R,3R)-2,3-dihydroxy-3-methylpentanoate (2,3-dihydroxy-3-methylvalerate) into 2-oxo-3-methylpentanoate (2-oxo-3-methylvalerate) and of (2R)-2,3-dihydroxy-3-methylbutanoate (2,3-dihydroxyisovalerate) into 2-oxo-3-methylbutanoate (2-oxoisovalerate), the penultimate precursor to L-isoleucine and L-valine, respectively. The protein is Dihydroxy-acid dehydratase of Methylobacillus flagellatus (strain ATCC 51484 / DSM 6875 / VKM B-1610 / KT).